Here is an 862-residue protein sequence, read N- to C-terminus: Pentatricopeptide repeat-containing protein At1g74850, chloroplastic (862 aa).

The transit peptide at 1–66 directs the protein to the chloroplast; that stretch reads MNLAIPNPNS…DLVLGNPSVS (66 aa). 15 PPR repeats span residues 104–139, 140–174, 175–209, 210–245, 246–280, 281–315, 316–350, 351–385, 386–420, 421–455, 456–490, 491–525, 526–560, 561–595, and 596–630; these read SLND…WCKP, NEHI…GVSR, SVFS…KISP, SILT…GIQP, DIVT…GIVP, DLTT…GSLP, DITS…GCTP, NANT…NTDP, DAAT…NIEP, DMET…DIVP, SSKA…GSNP, SIET…GIPR, NRDT…RCDP, DERT…DILP, and SIMC…RVSN. A Smr domain is found at 713-801; the sequence is VDVHRMSEGG…RIMCQRSQLK (89 aa). The segment at 831–862 is disordered; sequence GTRASTSSDTNHSGNPTQRRTRTKKELAGSTA. Residues 833–848 show a composition bias toward polar residues; that stretch reads RASTSSDTNHSGNPTQ.

This sequence belongs to the PPR family. P subfamily. As to expression, mostly expressed in leaves, stems and flowers, but barely in roots.

The protein localises to the plastid. It is found in the chloroplast. Involved in plastid gene expression. This is Pentatricopeptide repeat-containing protein At1g74850, chloroplastic (PTAC2) from Arabidopsis thaliana (Mouse-ear cress).